A 422-amino-acid chain; its full sequence is Exodeoxyribonuclease 7 large subunit (422 aa).

Belongs to the XseA family. Heterooligomer composed of large and small subunits.

The protein localises to the cytoplasm. The catalysed reaction is Exonucleolytic cleavage in either 5'- to 3'- or 3'- to 5'-direction to yield nucleoside 5'-phosphates.. Bidirectionally degrades single-stranded DNA into large acid-insoluble oligonucleotides, which are then degraded further into small acid-soluble oligonucleotides. In Leptospira interrogans serogroup Icterohaemorrhagiae serovar copenhageni (strain Fiocruz L1-130), this protein is Exodeoxyribonuclease 7 large subunit.